The following is a 1374-amino-acid chain: MVQQLQKSMSDGMATTAAAVPMNANGVDTGKVPTAPPDVFFSTENEPEDCTPVKMDPFDRPKSDKDPVEDAIERLLKVMEKIDCPYTPGKEKGVDQDESDDMTESEDHDEMAKDDEGIPANEVRVETRKMDCTTGQLVAPRIYEKVDTLSSTSESSAEEDESMMIIKEGIRVCYGVWKKRQKNSEMALKGLAIVLELCLTQPSARDEIFSVLLETLGFNTVTYWKAVVPQVVDSDLTYATQYREALLFSMCLYDVNHSKNRLRELYAAIPGFRQSMLGIRAKQFTERYRHLQMKIARSRQSSRMSSKYGSEDNIQAMVTLANDVIMDEETAPTQMPLVDMSHDKQRVINVSNAPPVSISRKTSGSWEIKQGSGGLVACVDPVMSADKKNIWLSNLGVNMQEELKEHSTTTNSIGLPLIKQACAGEVFCVLERNEKKELTPKQQAVESDMSLLSVLNTYNKHSYQLNPVVVNQDDYDTYYGGISNGLLWPALHNLPQFISPCYNDPEALREQWCAYVRVNYLFSINAARNSRAQDFIWIHDYHLMLCGQIMRSLEGSLDVSSIEEREGKQKESLQIGFFLHIPFQPPANFMTKYRTVGEPIVRALLRFTKVGFQTSRDRETFVKLVADHIKRTKIDYDSRLDRYTIEHDGFACSLGVFPVSIKIADFVNIAKNPQTVIEAEEIRKQIMGKCADGGQLFFSVERFDYTKGIAEKLRAWQRYFEKYPDRIGKDVLFQVAVTNRRSVESYRQYQDDVMALAELINQKFHSEQYPEWKPVIFETDGLPRSRLIAHYLAMDIGVVTPSKDGMNLVAKEMLVCNPTASLVLSTGAGTEVQLSNAQFYSEQEGKCYHRVEDIANTEAFADNFFAAATESKETRNKHGEKINQFLCVHDIDEWSDQFLDPKWTHEVISECEVKQLGQFYGLMNRTAQVRRQIVECVLKGLPIRPHFKFSLENAKVTRQANDSECTTLTSLETSCPEGTSKLTLEADEESGEEKGFKITYDIHDELSEMEKDLAFLSFIQSDEYENAEEFIKTIGSFYEGGPILFSEEVKQAAEMLQRGIHYNTFFTDRDGTLKSYACSYPTSVQPAYSAVIQAQFARRCATFCAIVTTAPLIHTGILEVATIPEGYYAYGASAGREWYLNPAQQFKDRSFSAVDLTLMNKVFELIEELLEKPEFRTFKWIGSGIQKHCGHITIAKQDVNGTIPARKVTRLHEQLVKIVNDFDPTGTTLTMRESDLDFKIYVKAKLKGRIFNKGHGIRLVKERLKPNMSKGSCLVCGDSESDIPMLEECLKLAGSKVYTIWVTRDQALQEKVSQLCERYSCTNIHYVTCPQVLLGAMAYATAHTLTNEKNRKADSYYDDSDTPMDQEDTPSKQQ.

3 disordered regions span residues 28–66, 86–117, and 1352–1374; these read DTGKVPTAPPDVFFSTENEPEDCTPVKMDPFDRPKSDKD, YTPGKEKGVDQDESDDMTESEDHDEMAKDDEG, and KADSYYDDSDTPMDQEDTPSKQQ. Basic and acidic residues-rich tracts occupy residues 56–66 and 86–95; these read DPFDRPKSDKD and YTPGKEKGVD. Composition is skewed to acidic residues over residues 96 to 109 and 1356 to 1368; these read QDESDDMTESEDHD and YYDDSDTPMDQED.

In the N-terminal section; belongs to the glycosyltransferase 20 family. The protein in the C-terminal section; belongs to the gob-1 trehalose phosphatase family.

It carries out the reaction D-glucose 6-phosphate + UDP-alpha-D-glucose = alpha,alpha-trehalose 6-phosphate + UDP + H(+). Its function is as follows. Catalyzes the production of trehalose from glucose-6-phosphate and UDP-alpha-D-glucose in a 2 step process. In Caenorhabditis briggsae, this protein is Alpha,alpha-trehalose-phosphate synthase [UDP-forming] 1 (tps-1).